Consider the following 389-residue polypeptide: MRPLVAARRRAAACCALAACMLALAFAPAAARAERLKDLAQIQGVRDNPLIGYGLVVGLDGTGDQTMQTPFTTQTLANMLANLGISINNGSANGGGSSAMTNMQLKNVAAVMVTATLPPFARPGEAIDVTVSSLGNAKSLRGGTLLLTPLKGADGQVYALAQGNMAVGGAGASANGSRVQVNQLAAGRIAGGAIVERSVPNAVAQMNGVLQLQLNDMDYGTAQRIVSAVNSSFGAGTATALDGRTIQLTAPADSAQQVAFMARLQNLEVSPERAAAKVILNARTGSIVMNQMVTLQNCAVAHGNLSVVVNTQPVVSQPGPFSNGQTVVAQQSQIQLKQDNGSLRMVTAGANLAEVVKALNSLGATPADLMSILQAMKAAGALRADLEII.

Residues 1 to 33 form the signal peptide; it reads MRPLVAARRRAAACCALAACMLALAFAPAAARA.

It belongs to the FlgI family. The basal body constitutes a major portion of the flagellar organelle and consists of four rings (L,P,S, and M) mounted on a central rod.

The protein resides in the periplasm. It localises to the bacterial flagellum basal body. Its function is as follows. Assembles around the rod to form the L-ring and probably protects the motor/basal body from shearing forces during rotation. In Burkholderia mallei (strain ATCC 23344), this protein is Flagellar P-ring protein.